A 173-amino-acid chain; its full sequence is Crossover junction endodeoxyribonuclease RuvC (173 aa).

Residues Asp-8, Glu-67, and Asp-139 contribute to the active site. Residues Asp-8, Glu-67, and Asp-139 each coordinate Mg(2+).

It belongs to the RuvC family. Homodimer which binds Holliday junction (HJ) DNA. The HJ becomes 2-fold symmetrical on binding to RuvC with unstacked arms; it has a different conformation from HJ DNA in complex with RuvA. In the full resolvosome a probable DNA-RuvA(4)-RuvB(12)-RuvC(2) complex forms which resolves the HJ. Mg(2+) serves as cofactor.

It is found in the cytoplasm. The enzyme catalyses Endonucleolytic cleavage at a junction such as a reciprocal single-stranded crossover between two homologous DNA duplexes (Holliday junction).. Its function is as follows. The RuvA-RuvB-RuvC complex processes Holliday junction (HJ) DNA during genetic recombination and DNA repair. Endonuclease that resolves HJ intermediates. Cleaves cruciform DNA by making single-stranded nicks across the HJ at symmetrical positions within the homologous arms, yielding a 5'-phosphate and a 3'-hydroxyl group; requires a central core of homology in the junction. The consensus cleavage sequence is 5'-(A/T)TT(C/G)-3'. Cleavage occurs on the 3'-side of the TT dinucleotide at the point of strand exchange. HJ branch migration catalyzed by RuvA-RuvB allows RuvC to scan DNA until it finds its consensus sequence, where it cleaves and resolves the cruciform DNA. This chain is Crossover junction endodeoxyribonuclease RuvC, found in Vibrio atlanticus (strain LGP32) (Vibrio splendidus (strain Mel32)).